A 178-amino-acid polypeptide reads, in one-letter code: Peptide methionine sulfoxide reductase MsrA (178 aa).

C12 is a catalytic residue.

Belongs to the MsrA Met sulfoxide reductase family.

It carries out the reaction L-methionyl-[protein] + [thioredoxin]-disulfide + H2O = L-methionyl-(S)-S-oxide-[protein] + [thioredoxin]-dithiol. It catalyses the reaction [thioredoxin]-disulfide + L-methionine + H2O = L-methionine (S)-S-oxide + [thioredoxin]-dithiol. Has an important function as a repair enzyme for proteins that have been inactivated by oxidation. Catalyzes the reversible oxidation-reduction of methionine sulfoxide in proteins to methionine. The protein is Peptide methionine sulfoxide reductase MsrA of Erwinia tasmaniensis (strain DSM 17950 / CFBP 7177 / CIP 109463 / NCPPB 4357 / Et1/99).